A 532-amino-acid chain; its full sequence is Intercellular adhesion molecule 1 (532 aa).

The first 27 residues, 1 to 27 (MAPSSPRPALPALLVLLGALFPGPGNA), serve as a signal peptide directing secretion. At 28-480 (QTSVSPPKVI…TVNVLSPRYE (453 aa)) the chain is on the extracellular side. 2 consecutive Ig-like C2-type domains span residues 41-103 (GGSV…QSTA) and 128-193 (GKDL…LDLR). Cystine bridges form between C48–C92, C52–C96, and C135–C186. The Cell attachment site; atypical signature appears at 152 to 154 (RGE). N-linked (GlcNAc...) asparagine glycosylation is found at N202 and N267. 2 Ig-like C2-type domains span residues 230–297 (DTQG…LGTQ) and 325–378 (GTEV…LEVA). 2 disulfide bridges follow: C237–C290 and C332–C371. 2 N-linked (GlcNAc...) asparagine glycosylation sites follow: N385 and N406. Cystine bridges form between C403–C419, C419–C457, and C431–C457. One can recognise an Ig-like C2-type 5 domain in the interval 412–464 (NSQQTPMCQAWGNPLPELKCLKDGTFPLPVGESVTVTRDLEGTYLCRARSTQG). The chain crosses the membrane as a helical span at residues 481 to 503 (FVIIAVVAAAVIMGTAGLSTYLY). Residues 504–532 (NRQRKIRKYRLQQAQKGTPMKPNTQATPP) lie on the Cytoplasmic side of the membrane. Residues T521 and T530 each carry the phosphothreonine modification.

It belongs to the immunoglobulin superfamily. ICAM family. In terms of assembly, homodimer. Interacts with MUC1 and promotes cell aggregation in epithelial cells. Interacts with ARHGEF26/SGEF. Interacts (on T cell side) with CD81, CD247 and CD9 at immunological synapses between antigen-presenting cells and T cells. Post-translationally, monoubiquitinated, which is promoted by MARCH9 and leads to endocytosis.

Its subcellular location is the membrane. In terms of biological role, ICAM proteins are ligands for the leukocyte adhesion protein LFA-1 (integrin alpha-L/beta-2). During leukocyte trans-endothelial migration, ICAM1 engagement promotes the assembly of endothelial apical cups through ARHGEF26/SGEF and RHOG activation. The chain is Intercellular adhesion molecule 1 (ICAM1) from Gorilla gorilla gorilla (Western lowland gorilla).